Reading from the N-terminus, the 250-residue chain is 1-(5-phosphoribosyl)-5-[(5-phosphoribosylamino)methylideneamino] imidazole-4-carboxamide isomerase (250 aa).

Residue D8 is the Proton acceptor of the active site. D129 serves as the catalytic Proton donor.

This sequence belongs to the HisA/HisF family.

The protein resides in the cytoplasm. The enzyme catalyses 1-(5-phospho-beta-D-ribosyl)-5-[(5-phospho-beta-D-ribosylamino)methylideneamino]imidazole-4-carboxamide = 5-[(5-phospho-1-deoxy-D-ribulos-1-ylimino)methylamino]-1-(5-phospho-beta-D-ribosyl)imidazole-4-carboxamide. Its pathway is amino-acid biosynthesis; L-histidine biosynthesis; L-histidine from 5-phospho-alpha-D-ribose 1-diphosphate: step 4/9. This Desulfovibrio desulfuricans (strain ATCC 27774 / DSM 6949 / MB) protein is 1-(5-phosphoribosyl)-5-[(5-phosphoribosylamino)methylideneamino] imidazole-4-carboxamide isomerase.